Reading from the N-terminus, the 151-residue chain is Small ribosomal subunit protein uS15y (151 aa).

It belongs to the universal ribosomal protein uS15 family.

This chain is Small ribosomal subunit protein uS15y (RPS13B), found in Arabidopsis thaliana (Mouse-ear cress).